Reading from the N-terminus, the 507-residue chain is Bifunctional purine biosynthesis protein PurH (507 aa).

In terms of domain architecture, MGS-like spans 1–144; that stretch reads MKRALLSVSD…KNSDSVWAVV (144 aa).

The protein belongs to the PurH family.

The enzyme catalyses (6R)-10-formyltetrahydrofolate + 5-amino-1-(5-phospho-beta-D-ribosyl)imidazole-4-carboxamide = 5-formamido-1-(5-phospho-D-ribosyl)imidazole-4-carboxamide + (6S)-5,6,7,8-tetrahydrofolate. It carries out the reaction IMP + H2O = 5-formamido-1-(5-phospho-D-ribosyl)imidazole-4-carboxamide. Its pathway is purine metabolism; IMP biosynthesis via de novo pathway; 5-formamido-1-(5-phospho-D-ribosyl)imidazole-4-carboxamide from 5-amino-1-(5-phospho-D-ribosyl)imidazole-4-carboxamide (10-formyl THF route): step 1/1. It functions in the pathway purine metabolism; IMP biosynthesis via de novo pathway; IMP from 5-formamido-1-(5-phospho-D-ribosyl)imidazole-4-carboxamide: step 1/1. The protein is Bifunctional purine biosynthesis protein PurH of Lacticaseibacillus paracasei (strain ATCC 334 / BCRC 17002 / CCUG 31169 / CIP 107868 / KCTC 3260 / NRRL B-441) (Lactobacillus paracasei).